The chain runs to 490 residues: Homoserine O-acetyltransferase (490 aa).

Residues Asn47 to Ile353 form the AB hydrolase-1 domain. Ser152 (nucleophile) is an active-site residue. Arg221 is a substrate binding site. Active-site residues include Asp315 and His348. Asp349 is a substrate binding site. 2 consecutive CBS domains span residues Met375–Leu432 and Met436–Pro490.

This sequence belongs to the AB hydrolase superfamily. MetX family. Homodimer.

The protein localises to the cytoplasm. The catalysed reaction is L-homoserine + acetyl-CoA = O-acetyl-L-homoserine + CoA. It participates in amino-acid biosynthesis; L-methionine biosynthesis via de novo pathway; O-acetyl-L-homoserine from L-homoserine: step 1/1. In terms of biological role, transfers an acetyl group from acetyl-CoA to L-homoserine, forming acetyl-L-homoserine. The protein is Homoserine O-acetyltransferase of Methanosphaerula palustris (strain ATCC BAA-1556 / DSM 19958 / E1-9c).